Here is a 269-residue protein sequence, read N- to C-terminus: Trans-aconitate 2-methyltransferase (269 aa).

Belongs to the methyltransferase superfamily. Tam family.

Its subcellular location is the cytoplasm. The enzyme catalyses trans-aconitate + S-adenosyl-L-methionine = (E)-3-(methoxycarbonyl)pent-2-enedioate + S-adenosyl-L-homocysteine. Functionally, catalyzes the S-adenosylmethionine monomethyl esterification of trans-aconitate. This Streptomyces avermitilis (strain ATCC 31267 / DSM 46492 / JCM 5070 / NBRC 14893 / NCIMB 12804 / NRRL 8165 / MA-4680) protein is Trans-aconitate 2-methyltransferase.